Here is a 72-residue protein sequence, read N- to C-terminus: Large ribosomal subunit protein bL31 (72 aa).

The protein belongs to the bacterial ribosomal protein bL31 family. Type A subfamily. As to quaternary structure, part of the 50S ribosomal subunit.

Functionally, binds the 23S rRNA. This is Large ribosomal subunit protein bL31 from Deinococcus geothermalis (strain DSM 11300 / CIP 105573 / AG-3a).